The primary structure comprises 311 residues: MFKKWLQPSNEELIKAIYVKNEAEAQKLIAKMDILELSKIYIDNTALIWAVDKGLEKVCEMLIPKMSEQAINHVTNNGNTALTLAASKGLEKICELLIPKMSPQAINHVTDNGNTALTWAAWKDLEKICEMLIPKMSPQAINQVTNNGNTALILAAWKGLEKICKILIPKMFEQAINQVTNKGCTALTLAADKDLKKIYELLINKMSIDAINHTLTSSHKEVKKFIQEKISYNNILAEKLALFLKESFLGKGKDNINNFVKMISAAKFYKIVNKKLLTEYLQKQEVDNSKFIIEEMNNFIKTHSFTIARIC.

ANK repeat units follow at residues 42 to 71 (IDNTALIWAVDKGLEKVCEMLIPKMSEQAI), 77 to 106 (NGNTALTLAASKGLEKICELLIPKMSPQAI), 112 to 141 (NGNTALTWAAWKDLEKICEMLIPKMSPQAI), 147 to 176 (NGNTALILAAWKGLEKICKILIPKMFEQAI), and 182 to 213 (KGCTALTLAADKDLKKIYELLINKMSIDAINH).

The polypeptide is Putative ankyrin repeat protein RF_0923 (Rickettsia felis (strain ATCC VR-1525 / URRWXCal2) (Rickettsia azadi)).